The chain runs to 214 residues: Cell division protein SepF (214 aa).

The interval 23–70 (YYDDRAPSRGFPRPRFDDGYGRYDGDDYDDPRREPADYPPPAGYRGGY) is disordered. The span at 36–58 (PRFDDGYGRYDGDDYDDPRREPA) shows a compositional bias: basic and acidic residues.

The protein belongs to the SepF family. Homodimer. Interacts with FtsZ.

It is found in the cytoplasm. Functionally, cell division protein that is part of the divisome complex and is recruited early to the Z-ring. Probably stimulates Z-ring formation, perhaps through the cross-linking of FtsZ protofilaments. Its function overlaps with FtsA. The polypeptide is Cell division protein SepF (Mycobacterium avium (strain 104)).